The sequence spans 69 residues: Ribosome modulation factor (69 aa).

The protein belongs to the ribosome modulation factor family.

Its subcellular location is the cytoplasm. Functionally, during stationary phase, converts 70S ribosomes to an inactive dimeric form (100S ribosomes). The polypeptide is Ribosome modulation factor (Hahella chejuensis (strain KCTC 2396)).